A 65-amino-acid chain; its full sequence is Large ribosomal subunit protein bL35 (65 aa).

A compositionally biased stretch (basic residues) spans 1-16; the sequence is MVPKQKTHSGAKKRFK. The interval 1–39 is disordered; that stretch reads MVPKQKTHSGAKKRFKLTGSGSVSRARAGMRHNFEHRSS.

It belongs to the bacterial ribosomal protein bL35 family.

The sequence is that of Large ribosomal subunit protein bL35 from Tropheryma whipplei (strain TW08/27) (Whipple's bacillus).